We begin with the raw amino-acid sequence, 367 residues long: Chorismate synthase (367 aa).

Arg48 provides a ligand contact to NADP(+). FMN contacts are provided by residues Arg125 to Ser127, Asn238 to Ala239, Gly278, Lys293 to Ser297, and Arg319.

This sequence belongs to the chorismate synthase family. As to quaternary structure, homotetramer. It depends on FMNH2 as a cofactor.

It carries out the reaction 5-O-(1-carboxyvinyl)-3-phosphoshikimate = chorismate + phosphate. It functions in the pathway metabolic intermediate biosynthesis; chorismate biosynthesis; chorismate from D-erythrose 4-phosphate and phosphoenolpyruvate: step 7/7. In terms of biological role, catalyzes the anti-1,4-elimination of the C-3 phosphate and the C-6 proR hydrogen from 5-enolpyruvylshikimate-3-phosphate (EPSP) to yield chorismate, which is the branch point compound that serves as the starting substrate for the three terminal pathways of aromatic amino acid biosynthesis. This reaction introduces a second double bond into the aromatic ring system. In Halorhodospira halophila (strain DSM 244 / SL1) (Ectothiorhodospira halophila (strain DSM 244 / SL1)), this protein is Chorismate synthase.